Here is a 1446-residue protein sequence, read N- to C-terminus: ABC transporter G family member 53 (1446 aa).

In terms of domain architecture, ABC transporter 1 spans 153 to 426 (ANTLHITPNR…FESVGFKCPE (274 aa)). 186-193 (GPPGAGKT) contacts ATP. The ABC transmembrane type-2 1 domain occupies 504-717 (ELLKANIDRE…AQNAISVNEF (214 aa)). Helical transmembrane passes span 523–543 (VYIF…TVFI), 555–575 (GGIY…NGLA), 610–630 (TPLS…VIGF), 641–661 (FLLL…IAGF), 666–686 (VVAS…GGFI), and 752–772 (IGVG…TICL). An ABC transporter 2 domain is found at 849–1101 (ITFEDIRYSV…ELIRYFESIE (253 aa)). 894–901 (GVSGAGKT) serves as a coordination point for ATP. In terms of domain architecture, ABC transmembrane type-2 2 spans 1174–1388 (TQCLACLWKQ…TLYGLVTSQF (215 aa)). Transmembrane regions (helical) follow at residues 1195–1215 (AVKY…FWGV), 1225–1242 (LFNA…MGVQ), 1281–1301 (LPYI…MIGF), 1308–1328 (FFWY…YGMM), 1338–1358 (VASV…GFII), 1363–1383 (IPIW…LYGL), and 1415–1435 (FLWV…FLFG).

Belongs to the ABC transporter superfamily. ABCG family. PDR (TC 3.A.1.205) subfamily.

It localises to the membrane. May be a general defense protein. This Oryza sativa subsp. japonica (Rice) protein is ABC transporter G family member 53.